Consider the following 967-residue polypeptide: Phosphoenolpyruvate carboxylase (967 aa).

Ser-10 is modified (phosphoserine). Catalysis depends on residues His-171 and Lys-601. The disordered stretch occupies residues 915 to 936; it reads NASRLPLSRESPEATKPADELV. A compositionally biased stretch (basic and acidic residues) spans 924 to 933; the sequence is ESPEATKPAD.

This sequence belongs to the PEPCase type 1 family. In terms of assembly, homotetramer. Requires Mg(2+) as cofactor.

It localises to the cytoplasm. It catalyses the reaction oxaloacetate + phosphate = phosphoenolpyruvate + hydrogencarbonate. With respect to regulation, by light-reversible phosphorylation. Functionally, through the carboxylation of phosphoenolpyruvate (PEP) it forms oxaloacetate, a four-carbon dicarboxylic acid source for the tricarboxylic acid cycle. This Pisum sativum (Garden pea) protein is Phosphoenolpyruvate carboxylase.